The sequence spans 406 residues: Anthranilate 1,2-dioxygenase system ferredoxin--NAD(+) reductase component (406 aa).

5-37 is a binding site for FAD; the sequence is PFVIVGAGHAARRTAEALRARDADAPIVMIGAE. 152–161 provides a ligand contact to NAD(+); that stretch reads GGGFIGLEVA.

The protein belongs to the FAD-dependent oxidoreductase family. In terms of assembly, part of a multicomponent enzyme system composed of a reductase (AndAa), a ferredoxin (AndAb) and a two-subunit oxygenase component (AndAc and AndAd). FAD serves as cofactor.

It carries out the reaction 2 reduced [2Fe-2S]-[ferredoxin] + NAD(+) + H(+) = 2 oxidized [2Fe-2S]-[ferredoxin] + NADH. It functions in the pathway aromatic compound metabolism; anthranilate degradation via hydroxylation; catechol from anthranilate: step 1/1. Part of the multicomponent anthranilate dioxygenase, that converts anthranilate to catechol. Probably transfers electrons from ferredoxin (AndAb) to NADH. This is Anthranilate 1,2-dioxygenase system ferredoxin--NAD(+) reductase component from Burkholderia cepacia (Pseudomonas cepacia).